We begin with the raw amino-acid sequence, 811 residues long: Ribonucleoside-diphosphate reductase large chain (811 aa).

The ATP-cone domain occupies 1–92; sequence MFVYKRDGRQ…VSNLHKQTEK (92 aa). ATP-binding positions include 5-6, 11-17, T53, and D57; these read KR and EKVAFDK. GDP-binding residues include S202 and S217. Residues C218 and C444 are joined by a disulfide bond. DTTP-binding positions include 226 to 228, K243, R256, and 263 to 264; these read DSI and AG. N427 contacts GDP. N427 serves as the catalytic Proton acceptor. Residue C429 is the Cysteine radical intermediate of the active site. GDP-binding positions include E431 and 603-606; that span reads TAST. E431 serves as the catalytic Proton acceptor.

Belongs to the ribonucleoside diphosphate reductase large chain family. As to quaternary structure, heterodimer of a large and a small subunit. Interacts with SPD1.

The enzyme catalyses a 2'-deoxyribonucleoside 5'-diphosphate + [thioredoxin]-disulfide + H2O = a ribonucleoside 5'-diphosphate + [thioredoxin]-dithiol. With respect to regulation, under complex allosteric control mediated by deoxynucleoside triphosphates and ATP binding to separate specificity and activation sites on the large subunit. The type of nucleotide bound at the specificity site determines substrate preference. It seems probable that ATP makes the enzyme reduce CDP and UDP, dGTP favors ADP reduction and dTTP favors GDP reduction. Stimulated by ATP and inhibited by dATP binding to the activity site. Provides the precursors necessary for DNA synthesis. Catalyzes the biosynthesis of deoxyribonucleotides from the corresponding ribonucleotides. The polypeptide is Ribonucleoside-diphosphate reductase large chain (cdc22) (Schizosaccharomyces pombe (strain 972 / ATCC 24843) (Fission yeast)).